The sequence spans 76 residues: UPF0291 protein Aflv_1503 (76 aa).

The tract at residues 56-76 (DPNGNDVTPQKLKDSKKKRLH) is disordered.

This sequence belongs to the UPF0291 family.

It is found in the cytoplasm. This is UPF0291 protein Aflv_1503 from Anoxybacillus flavithermus (strain DSM 21510 / WK1).